Reading from the N-terminus, the 218-residue chain is Probable 2-aminoethanethiol dioxygenase (218 aa).

It depends on Fe cation as a cofactor.

The catalysed reaction is cysteamine + O2 = hypotaurine + H(+). This is Probable 2-aminoethanethiol dioxygenase (ado-1) from Dictyostelium discoideum (Social amoeba).